The chain runs to 864 residues: Alpha-glucosidase (864 aa).

The signal sequence occupies residues methionine 1 to threonine 22. 3 N-linked (GlcNAc...) asparagine glycosylation sites follow: asparagine 187, asparagine 364, and asparagine 406. The active-site Nucleophile is the aspartate 430. The active site involves glutamate 433. N-linked (GlcNAc...) asparagine glycans are attached at residues asparagine 466 and asparagine 500. Residue aspartate 567 is the Proton donor of the active site. Asparagine 568 and asparagine 734 each carry an N-linked (GlcNAc...) asparagine glycan.

Belongs to the glycosyl hydrolase 31 family.

It carries out the reaction Hydrolysis of terminal, non-reducing (1-&gt;4)-linked alpha-D-glucose residues with release of alpha-D-glucose.. Functionally, hydrolyzes not only malto-oligosaccharides but also soluble starch. The sequence is that of Alpha-glucosidase from Mucor javanicus.